Consider the following 838-residue polypeptide: Leucine--tRNA ligase (838 aa).

Residues 36 to 46 (PYPSGKIHMGH) carry the 'HIGH' region motif. The 'KMSKS' region motif lies at 611-615 (KMSKS). Lys-614 contacts ATP.

The protein belongs to the class-I aminoacyl-tRNA synthetase family.

The protein localises to the cytoplasm. It catalyses the reaction tRNA(Leu) + L-leucine + ATP = L-leucyl-tRNA(Leu) + AMP + diphosphate. The sequence is that of Leucine--tRNA ligase from Wolbachia pipientis wMel.